Reading from the N-terminus, the 543-residue chain is Chaperonin GroEL (543 aa).

ATP is bound by residues 29–32 (TVGP), 86–90 (DGTTT), glycine 413, and aspartate 504.

This sequence belongs to the chaperonin (HSP60) family. In terms of assembly, forms a cylinder of 14 subunits composed of two heptameric rings stacked back-to-back. Interacts with the co-chaperonin GroES.

It localises to the cytoplasm. It catalyses the reaction ATP + H2O + a folded polypeptide = ADP + phosphate + an unfolded polypeptide.. Functionally, together with its co-chaperonin GroES, plays an essential role in assisting protein folding. The GroEL-GroES system forms a nano-cage that allows encapsulation of the non-native substrate proteins and provides a physical environment optimized to promote and accelerate protein folding. The polypeptide is Chaperonin GroEL (Mycoplasma genitalium (strain ATCC 33530 / DSM 19775 / NCTC 10195 / G37) (Mycoplasmoides genitalium)).